The primary structure comprises 155 residues: Small ribosomal subunit protein uS9 (155 aa).

This sequence belongs to the universal ribosomal protein uS9 family.

The sequence is that of Small ribosomal subunit protein uS9 from Rhizobium etli (strain CIAT 652).